The following is a 33-amino-acid chain: Beta-amanitin proprotein (33 aa).

A propeptide spanning residues 1 to 10 (MSDINATRLP) is cleaved from the precursor. Positions 11–18 (IWGIGCDP) form a cross-link, cyclopeptide (Ile-Pro). The 2'-cysteinyl-6'-hydroxytryptophan sulfoxide (Trp-Cys) cross-link spans 12 to 16 (WGIGC). The propeptide occupies 19 to 33 (CVGDDVAALTTRGEA).

Belongs to the MSDIN fungal toxin family. In terms of processing, processed by the macrocyclase-peptidase enzyme POPB to yield a toxic cyclic decapeptide. POPB first removes 10 residues from the N-terminus. Conformational trapping of the remaining peptide forces the enzyme to release this intermediate rather than proceed to macrocyclization. The enzyme rebinds the remaining peptide in a different conformation and catalyzes macrocyclization of the N-terminal 8 residues.

Toxin belonging to the bicyclic octapeptides amatoxins that acts by binding non-competitively to RNA polymerase II and greatly slowing the elongation of transcripts from target promoters. The polypeptide is Beta-amanitin proprotein (Amanita rimosa).